Consider the following 140-residue polypeptide: L-fucose mutarotase (140 aa).

The active-site Proton donor is His22. Residues Asp30, Arg107, and 129–131 contribute to the substrate site; that span reads YGN.

This sequence belongs to the RbsD / FucU family. FucU mutarotase subfamily. Homodecamer.

It is found in the cytoplasm. The enzyme catalyses alpha-L-fucose = beta-L-fucose. It functions in the pathway carbohydrate metabolism; L-fucose metabolism. Involved in the anomeric conversion of L-fucose. The protein is L-fucose mutarotase of Klebsiella pneumoniae subsp. pneumoniae (strain ATCC 700721 / MGH 78578).